A 273-amino-acid chain; its full sequence is MQQAQQKPFIPTIPAYQALKLDEDLINKCNYSIEQLMEIAGTAVAQATTHYIESTSSVSKAGVLVVCGPGNNGGDGLVAARHLSSGSMSSATVRVWLPKEPSSSVNKRMLSIAKHAGVVFIKDTNEEALHAILEFINSCESFYLVDAIFGFSFHGGPIKPPYDTVINTLLQMQTSMAIGPKTRIVSVDVPSGWSVDAQEWGLNTDKELIPDGLLRPDALISLTVPKNCSLWLPPGTAHYLGGNFLTPLLAMEYDVQEIQHYWSGVSSLFVVLS.

The 240-residue stretch at 18 to 257 folds into the YjeF N-terminal domain; sequence ALKLDEDLIN…LLAMEYDVQE (240 aa). Residue 71 to 75 participates in (6S)-NADPHX binding; it reads NNGGD. K(+) contacts are provided by Asn-72 and Asp-146. (6S)-NADPHX contacts are provided by residues 150–157, Tyr-162, and Asp-188; that span reads GFSFHGGP. Position 191 (Ser-191) interacts with K(+).

The protein belongs to the NnrE/AIBP family. K(+) serves as cofactor.

The enzyme catalyses (6R)-NADHX = (6S)-NADHX. It carries out the reaction (6R)-NADPHX = (6S)-NADPHX. In terms of biological role, catalyzes the epimerization of the S- and R-forms of NAD(P)HX, a damaged form of NAD(P)H that is a result of enzymatic or heat-dependent hydration. This is a prerequisite for the S-specific NAD(P)H-hydrate dehydratase to allow the repair of both epimers of NAD(P)HX. This chain is NAD(P)H-hydrate epimerase, found in Giardia intestinalis (strain ATCC 50803 / WB clone C6) (Giardia lamblia).